The primary structure comprises 253 residues: Claudin domain-containing protein 1 (253 aa).

A helical transmembrane segment spans residues 5–25; the sequence is FATAFVIACVLSLISTIYMAA. N-linked (GlcNAc...) asparagine glycosylation is found at Asn-42 and Asn-72. The next 3 membrane-spanning stretches (helical) occupy residues 141–161, 175–195, and 216–236; these read FLLP…GLCA, ILHL…VAGI, and FCLA…FIWA.

The protein belongs to the PMP-22/EMP/MP20 family. In the brain, highly expressed in endothelial cells of the cerebellum compared to other regions (at protein level).

It is found in the cell junction. The protein localises to the tight junction. The protein resides in the cell membrane. Plays a role in negatively regulating the permeability of cells to small molecules. This Mus musculus (Mouse) protein is Claudin domain-containing protein 1 (Cldnd1).